A 325-amino-acid polypeptide reads, in one-letter code: Anthranilate phosphoribosyltransferase (325 aa).

5-phospho-alpha-D-ribose 1-diphosphate is bound by residues Gly-74, 77–78, Thr-82, 84–87, 101–109, and Ser-113; these read GD, NVST, and KHGNVSITS. Anthranilate is bound at residue Gly-74. Position 86 (Ser-86) interacts with Mg(2+). Anthranilate is bound at residue Asn-104. Arg-159 contributes to the anthranilate binding site. 2 residues coordinate Mg(2+): Asp-217 and Glu-218.

The protein belongs to the anthranilate phosphoribosyltransferase family. Homodimer. Mg(2+) serves as cofactor.

It carries out the reaction N-(5-phospho-beta-D-ribosyl)anthranilate + diphosphate = 5-phospho-alpha-D-ribose 1-diphosphate + anthranilate. Its pathway is amino-acid biosynthesis; L-tryptophan biosynthesis; L-tryptophan from chorismate: step 2/5. Functionally, catalyzes the transfer of the phosphoribosyl group of 5-phosphorylribose-1-pyrophosphate (PRPP) to anthranilate to yield N-(5'-phosphoribosyl)-anthranilate (PRA). The sequence is that of Anthranilate phosphoribosyltransferase from Thermococcus kodakarensis (strain ATCC BAA-918 / JCM 12380 / KOD1) (Pyrococcus kodakaraensis (strain KOD1)).